A 546-amino-acid chain; its full sequence is Glucose-6-phosphate isomerase (546 aa).

The active-site Proton donor is Glu353. Catalysis depends on residues His384 and Lys512.

Belongs to the GPI family.

The protein resides in the cytoplasm. It carries out the reaction alpha-D-glucose 6-phosphate = beta-D-fructose 6-phosphate. It functions in the pathway carbohydrate biosynthesis; gluconeogenesis. Its pathway is carbohydrate degradation; glycolysis; D-glyceraldehyde 3-phosphate and glycerone phosphate from D-glucose: step 2/4. In terms of biological role, catalyzes the reversible isomerization of glucose-6-phosphate to fructose-6-phosphate. This is Glucose-6-phosphate isomerase from Methylococcus capsulatus (strain ATCC 33009 / NCIMB 11132 / Bath).